The following is a 457-amino-acid chain: Solute carrier family 38 member 6 (457 aa).

The residue at position 1 (M1) is an N-acetylmethionine. 2 positions are modified to phosphoserine: S4 and S7. The next 5 helical transmembrane spans lie at 48–68, 70–90, 112–132, 171–191, and 192–212; these read FGLS…LGLA, VMAN…ALLA, LGLF…IIIQ, LLII…KIGF, and LGYT…VVVI. C219 and C239 are joined by a disulfide. The next 6 membrane-spanning stretches (helical) occupy residues 251–271, 289–309, 328–348, 372–392, 395–415, and 432–452; these read VYAI…LPIY, AIAL…LTFY, VIVM…APLI, SLTT…VPDI, VFGV…PGLF, and ALFL…LIIF.

It belongs to the amino acid/polyamine transporter 2 family. In terms of tissue distribution, expressed exclusively in neurons and not in astrocytes and glia cells. Highly expressed in the synapse. Highly expressed in glutamatergic neurons. Primarily expressed in excitatory neurons, with some minor expression in inhibitory neurons.

The protein resides in the cell membrane. The protein localises to the synapse. The catalysed reaction is L-glutamine(out) = L-glutamine(in). It carries out the reaction L-glutamate(out) = L-glutamate(in). Its function is as follows. Amino acid transporter with an apparent selectivity for L-glutamine and L-glutamate. May facilitate glutamine uptake in excitatory neurons. The transport mechanism remains to be elucidated. This Mus musculus (Mouse) protein is Solute carrier family 38 member 6.